Reading from the N-terminus, the 146-residue chain is MKAFAVLFVLSLIKTELRPSYGLPLLQSGLYNTNQIFQKTQTLPPFIQDSNSTLPAPSTTNLPETNKLASHLQHRLSRSLLSANTTTPKTGGELRGLPTDDPWVVAGFVTLGVVAGGLVLILCYLYTPCCAYLVILCCWFKKWGPY.

2 N-linked (GlcNAc...) asparagine; by host glycosylation sites follow: asparagine 51 and asparagine 84.

E3 proteins seem to be dispensable for virus growth in tissue culture cells. They are potentially important for virus growth under special conditions; E3 region may help adenoviruses to evade the immune surveillance of the host. The protein is Early E3 16 kDa glycoprotein of Human adenovirus B serotype 3 (HAdV-3).